Reading from the N-terminus, the 276-residue chain is Large ribosomal subunit protein uL2 (276 aa).

Residues 224-265 (GTAMNPIDHPHGGGEGKNFGKHPVSPWGVQTKGKRTRSNKRT) form a disordered region.

This sequence belongs to the universal ribosomal protein uL2 family. Part of the 50S ribosomal subunit. Forms a bridge to the 30S subunit in the 70S ribosome.

Its function is as follows. One of the primary rRNA binding proteins. Required for association of the 30S and 50S subunits to form the 70S ribosome, for tRNA binding and peptide bond formation. It has been suggested to have peptidyltransferase activity; this is somewhat controversial. Makes several contacts with the 16S rRNA in the 70S ribosome. In Blochmanniella floridana, this protein is Large ribosomal subunit protein uL2.